The following is a 214-amino-acid chain: dITP/XTP pyrophosphatase (214 aa).

13-18 (SHNAGK) serves as a coordination point for substrate. Asp-45 and Asp-74 together coordinate Mg(2+). Asp-74 serves as the catalytic Proton acceptor. Substrate-binding positions include Ser-75, 163–166 (FGYD), Lys-186, and 199–200 (HR).

It belongs to the HAM1 NTPase family. In terms of assembly, homodimer. The cofactor is Mg(2+).

It catalyses the reaction XTP + H2O = XMP + diphosphate + H(+). The catalysed reaction is dITP + H2O = dIMP + diphosphate + H(+). It carries out the reaction ITP + H2O = IMP + diphosphate + H(+). Functionally, pyrophosphatase that catalyzes the hydrolysis of nucleoside triphosphates to their monophosphate derivatives, with a high preference for the non-canonical purine nucleotides XTP (xanthosine triphosphate), dITP (deoxyinosine triphosphate) and ITP. Seems to function as a house-cleaning enzyme that removes non-canonical purine nucleotides from the nucleotide pool, thus preventing their incorporation into DNA/RNA and avoiding chromosomal lesions. The polypeptide is dITP/XTP pyrophosphatase (Rhizobium meliloti (strain 1021) (Ensifer meliloti)).